The following is a 365-amino-acid chain: Probable dual-specificity RNA methyltransferase RlmN (365 aa).

Glu-108 (proton acceptor) is an active-site residue. Residues 114 to 352 (YPDRNTVCIS…SCTVRDTRGR (239 aa)) form the Radical SAM core domain. An intrachain disulfide couples Cys-121 to Cys-358. [4Fe-4S] cluster-binding residues include Cys-128, Cys-132, and Cys-135. Residues 179-180 (GE), Ser-213, 236-238 (SLH), and Asn-315 each bind S-adenosyl-L-methionine. The active-site S-methylcysteine intermediate is the Cys-358.

It belongs to the radical SAM superfamily. RlmN family. The cofactor is [4Fe-4S] cluster.

The protein localises to the cytoplasm. It catalyses the reaction adenosine(2503) in 23S rRNA + 2 reduced [2Fe-2S]-[ferredoxin] + 2 S-adenosyl-L-methionine = 2-methyladenosine(2503) in 23S rRNA + 5'-deoxyadenosine + L-methionine + 2 oxidized [2Fe-2S]-[ferredoxin] + S-adenosyl-L-homocysteine. The enzyme catalyses adenosine(37) in tRNA + 2 reduced [2Fe-2S]-[ferredoxin] + 2 S-adenosyl-L-methionine = 2-methyladenosine(37) in tRNA + 5'-deoxyadenosine + L-methionine + 2 oxidized [2Fe-2S]-[ferredoxin] + S-adenosyl-L-homocysteine. Its function is as follows. Specifically methylates position 2 of adenine 2503 in 23S rRNA and position 2 of adenine 37 in tRNAs. The protein is Probable dual-specificity RNA methyltransferase RlmN of Mycolicibacterium gilvum (strain PYR-GCK) (Mycobacterium gilvum (strain PYR-GCK)).